The primary structure comprises 672 residues: tRNA(Met) cytidine acetyltransferase TmcA (672 aa).

ATP contacts are provided by residues glutamine 180, 202–211, and arginine 319; that span reads GRGKSALAGQ. Residues 349–531 enclose the N-acetyltransferase domain; sequence IEISAFYQQA…SGCYTAMALL (183 aa). Acetyl-CoA-binding positions include 461 to 463, 468 to 474, and arginine 506; these read IAV and QREGIGQ.

It belongs to the RNA cytidine acetyltransferase family. TmcA subfamily.

The protein resides in the cytoplasm. The enzyme catalyses cytidine(34) in elongator tRNA(Met) + acetyl-CoA + ATP + H2O = N(4)-acetylcytidine(34) in elongator tRNA(Met) + ADP + phosphate + CoA + H(+). In terms of biological role, catalyzes the formation of N(4)-acetylcytidine (ac(4)C) at the wobble position of tRNA(Met), by using acetyl-CoA as an acetyl donor and ATP (or GTP). In Salmonella typhimurium (strain LT2 / SGSC1412 / ATCC 700720), this protein is tRNA(Met) cytidine acetyltransferase TmcA.